The chain runs to 688 residues: G-protein coupled receptor-associated protein LMBRD2 (688 aa).

At 1 to 3 (MSG) the chain is on the extracellular side. Residues 4-21 (AALGLEIVFVFFLALFLL) form a helical membrane-spanning segment. Residues 22 to 32 (HRYGDFKKQHR) are Cytoplasmic-facing. The chain crosses the membrane as a helical span at residues 33–53 (LVIIATLLAWYLCFLIVFILP). Topologically, residues 54 to 99 (LDVSTTIYNRCKLAVNSSPAESNSSFVTLAPSKQQCFKPWSYIPNG) are extracellular. Residue Asn-76 is glycosylated (N-linked (GlcNAc...) asparagine). The helical transmembrane segment at 100–120 (IMPIFWRVVYWTSQFLTWILL) threads the bilayer. The Cytoplasmic segment spans residues 121–144 (PFMQSYARSGGFSITGKIKTALIE). The chain crosses the membrane as a helical span at residues 145-165 (NAIYYGTYLLIFGAFLIYVAV). Residues 166-180 (NPKFNLQWNQLQTIG) are Extracellular-facing. Residues 181 to 201 (IAAANTWGLFLLVLLLGYGLV) traverse the membrane as a helical segment. Over 202–381 (EIPRSHWNGA…ECLLRPWFYR (180 aa)) the chain is Cytoplasmic. Residues 222–254 (FKAAKLMTEKADAEENLEDIMEEVRKVSESIKY) are a coiled coil. A helical transmembrane segment spans residues 382–402 (VLAVVLAAFSVIVVWSECTFF). Residues 403 to 426 (STRPVLSLVAVFIQLAEKTYNYIY) lie on the Extracellular side of the membrane. A helical transmembrane segment spans residues 427–447 (IEMACFLTIFFLSICVYSTVF). The Cytoplasmic segment spans residues 448-467 (RIRVFNYYYLASHHQTDAYS). Residues 468–488 (LLFSGMLFCRLTPPLCLNFLG) traverse the membrane as a helical segment. Over 489–515 (LTHMDATISHTDAQPTAYTSIMGSMKV) the chain is Extracellular. A helical membrane pass occupies residues 516–536 (LSFIADGFYIYYPMLVVILCI). At 537 to 688 (ATYFSLGTRC…MSRSRIFEDV (152 aa)) the chain is on the cytoplasmic side. Residues 600–617 (REDSTRNRVVHTEQKESS) are compositionally biased toward basic and acidic residues. The interval 600-673 (REDSTRNRVV…ESDSGRYQPG (74 aa)) is disordered. The segment covering 618–634 (FSETNTNRPLSKYTRTN) has biased composition (polar residues). Basic and acidic residues predominate over residues 635-644 (GRTERDRIEL).

This sequence belongs to the LIMR family.

Its subcellular location is the cell membrane. Functionally, may associate with G-protein coupled receptors and regulate downstream signaling pathways. This is G-protein coupled receptor-associated protein LMBRD2 from Gallus gallus (Chicken).